We begin with the raw amino-acid sequence, 154 residues long: Large ribosomal subunit protein uL15 (154 aa).

A disordered region spans residues 1 to 61; it reads MDLSTLKPVA…GGQMPLMRRM (61 aa).

The protein belongs to the universal ribosomal protein uL15 family. In terms of assembly, part of the 50S ribosomal subunit.

Binds to the 23S rRNA. This is Large ribosomal subunit protein uL15 from Oenococcus oeni (strain ATCC BAA-331 / PSU-1).